The chain runs to 64 residues: Large ribosomal subunit protein bL33c (64 aa).

This sequence belongs to the bacterial ribosomal protein bL33 family.

The protein resides in the plastid. It is found in the chloroplast. In Phaeodactylum tricornutum (strain CCAP 1055/1), this protein is Large ribosomal subunit protein bL33c.